A 270-amino-acid polypeptide reads, in one-letter code: Feruloyl esterase C (270 aa).

An N-terminal signal peptide occupies residues 1–21 (MLRAVLLPTLLAFGAFTPVHG).

Belongs to the faeC family.

It localises to the secreted. It catalyses the reaction feruloyl-polysaccharide + H2O = ferulate + polysaccharide.. Functionally, involved in degradation of plant cell walls. Hydrolyzes the feruloyl-arabinose ester bond in arabinoxylans, and the feruloyl-galactose ester bond in pectin. Active against paranitrophenyl-acetate, methyl ferulate and wheat arabinoxylan. This is Feruloyl esterase C (faeC) from Emericella nidulans (strain FGSC A4 / ATCC 38163 / CBS 112.46 / NRRL 194 / M139) (Aspergillus nidulans).